The chain runs to 396 residues: Probable peptidoglycan glycosyltransferase FtsW (396 aa).

A run of 9 helical transmembrane segments spans residues 17-37 (FCDG…WVMV), 61-81 (VFVL…MAWW), 83-103 (ANGP…LVAG), 117-137 (GIPL…VYLA), 159-179 (MVMA…AVVV), 198-218 (FLLL…AEPY), 274-294 (FVFA…VIGL), 316-336 (FAAY…FINI), and 350-370 (LPLL…VGML).

Belongs to the SEDS family. FtsW subfamily.

Its subcellular location is the cell inner membrane. It catalyses the reaction [GlcNAc-(1-&gt;4)-Mur2Ac(oyl-L-Ala-gamma-D-Glu-L-Lys-D-Ala-D-Ala)](n)-di-trans,octa-cis-undecaprenyl diphosphate + beta-D-GlcNAc-(1-&gt;4)-Mur2Ac(oyl-L-Ala-gamma-D-Glu-L-Lys-D-Ala-D-Ala)-di-trans,octa-cis-undecaprenyl diphosphate = [GlcNAc-(1-&gt;4)-Mur2Ac(oyl-L-Ala-gamma-D-Glu-L-Lys-D-Ala-D-Ala)](n+1)-di-trans,octa-cis-undecaprenyl diphosphate + di-trans,octa-cis-undecaprenyl diphosphate + H(+). It participates in cell wall biogenesis; peptidoglycan biosynthesis. Peptidoglycan polymerase that is essential for cell division. The protein is Probable peptidoglycan glycosyltransferase FtsW of Halomonas elongata (strain ATCC 33173 / DSM 2581 / NBRC 15536 / NCIMB 2198 / 1H9).